Consider the following 127-residue polypeptide: Fluoride-specific ion channel FluC 1 (127 aa).

A run of 4 helical transmembrane segments spans residues 3–23 (LLIV…VGQW), 35–55 (IAML…FGLY), 74–94 (IGFF…VLLI), and 102–122 (LFSY…LGFY). Residues Gly-78 and Thr-81 each coordinate Na(+).

It belongs to the fluoride channel Fluc/FEX (TC 1.A.43) family.

It localises to the cell membrane. The enzyme catalyses fluoride(in) = fluoride(out). Its activity is regulated as follows. Na(+) is not transported, but it plays an essential structural role and its presence is essential for fluoride channel function. In terms of biological role, fluoride-specific ion channel. Important for reducing fluoride concentration in the cell, thus reducing its toxicity. This chain is Fluoride-specific ion channel FluC 1, found in Halalkalibacterium halodurans (strain ATCC BAA-125 / DSM 18197 / FERM 7344 / JCM 9153 / C-125) (Bacillus halodurans).